A 130-amino-acid polypeptide reads, in one-letter code: Fluoride-specific ion channel FluC (130 aa).

4 consecutive transmembrane segments (helical) span residues 3 to 23 (FVFL…YFVG), 38 to 58 (LGTF…GHLA), 67 to 87 (FGIF…SYGL), and 102 to 122 (ISYV…GWFL). Glycine 77 and threonine 80 together coordinate Na(+).

The protein belongs to the fluoride channel Fluc/FEX (TC 1.A.43) family.

The protein resides in the cell inner membrane. It carries out the reaction fluoride(in) = fluoride(out). Na(+) is not transported, but it plays an essential structural role and its presence is essential for fluoride channel function. Fluoride-specific ion channel. Important for reducing fluoride concentration in the cell, thus reducing its toxicity. This chain is Fluoride-specific ion channel FluC, found in Helicobacter pylori (strain G27).